Reading from the N-terminus, the 936-residue chain is Lipoxygenase 2.1, chloroplastic (936 aa).

The interval 1-69 (MLTATKPLVG…LSADSNGAAV (69 aa)) is disordered. A compositionally biased stretch (low complexity) spans 47–59 (STSTSTTTTTTTT). The PLAT domain maps to 88-217 (MKATVTVHMS…CTPDKRVFFP (130 aa)). In terms of domain architecture, Lipoxygenase spans 220–936 (SYLPSQTPKG…EMGIPNSISI (717 aa)). The disordered stretch occupies residues 264-308 (LGNPDDDNNPTTRPVLGGKEHPYPRRCRTGRPRSKKDPFSEERSH). Basic residues predominate over residues 287–297 (PRRCRTGRPRS). Residues 298–308 (KKDPFSEERSH) show a composition bias toward basic and acidic residues. Residues H587, H592, H777, N781, and I936 each contribute to the Fe cation site.

This sequence belongs to the lipoxygenase family. Requires Fe cation as cofactor. The N-terminus is blocked.

Its subcellular location is the plastid. It localises to the chloroplast. It carries out the reaction (9Z,12Z)-octadecadienoate + O2 = (13S)-hydroperoxy-(9Z,11E)-octadecadienoate. The catalysed reaction is (9Z,12Z,15Z)-octadecatrienoate + O2 = (13S)-hydroperoxy-(9Z,11E,15Z)-octadecatrienoate. It participates in lipid metabolism; oxylipin biosynthesis. Plant lipoxygenase may be involved in a number of diverse aspects of plant physiology including growth and development, pest resistance, and senescence or responses to wounding. This enzyme is possibly involved in jasmonic acid synthesis. It exhibits linoleate 13-lipoxygenase and arachidonate 15-lipoxygenase activity. The chain is Lipoxygenase 2.1, chloroplastic (LOX2.1) from Hordeum vulgare (Barley).